The chain runs to 284 residues: Succinate dehydrogenase [ubiquinone] iron-sulfur subunit, mitochondrial (284 aa).

Residues 1 to 26 constitute a mitochondrion transit peptide; that stretch reads MAAVVFSLRRSGPVFRLPGVLQVCRG. In terms of domain architecture, 2Fe-2S ferredoxin-type spans 44–137; it reads KKFAIYRWDP…VSKIYPLPHM (94 aa). [2Fe-2S] cluster contacts are provided by Cys97, Cys102, Cys105, and Cys117. The 4Fe-4S ferredoxin-type domain occupies 180–210; that stretch reads DRDKLDGLYECILCACCSTSCPSYWWNADKY. [4Fe-4S] cluster contacts are provided by Cys190, Cys193, and Cys196. Cys200 provides a ligand contact to [3Fe-4S] cluster. Trp205 provides a ligand contact to a ubiquinone. The [3Fe-4S] cluster site is built by Cys247 and Cys253. A [4Fe-4S] cluster-binding site is contributed by Cys257.

This sequence belongs to the succinate dehydrogenase/fumarate reductase iron-sulfur protein family. In terms of assembly, component of complex II composed of four subunits: the flavoprotein (FP) sdha, iron-sulfur protein (IP) sdhb, and a cytochrome b composed of sdhc and sdhd. Requires [2Fe-2S] cluster as cofactor. The cofactor is [3Fe-4S] cluster. It depends on [4Fe-4S] cluster as a cofactor.

Its subcellular location is the mitochondrion inner membrane. It catalyses the reaction a quinone + succinate = fumarate + a quinol. The enzyme catalyses (R)-malate + a quinone = enol-oxaloacetate + a quinol. It carries out the reaction (S)-malate + a quinone = enol-oxaloacetate + a quinol. It participates in carbohydrate metabolism; tricarboxylic acid cycle; fumarate from succinate (eukaryal route): step 1/1. Enol-oxaloacetate inhibits the succinate dehydrogenase activity. Functionally, iron-sulfur protein (IP) subunit of the succinate dehydrogenase complex (mitochondrial respiratory chain complex II), responsible for transferring electrons from succinate to ubiquinone (coenzyme Q). SDH also oxidizes malate to the non-canonical enol form of oxaloacetate, enol-oxaloacetate. Enol-oxaloacetate, which is a potent inhibitor of the succinate dehydrogenase activity, is further isomerized into keto-oxaloacetate. The polypeptide is Succinate dehydrogenase [ubiquinone] iron-sulfur subunit, mitochondrial (sdhb) (Xenopus tropicalis (Western clawed frog)).